Consider the following 605-residue polypeptide: MDPKAIKEELRLFQSTLLQDGLKELLNENKFVDCTLKIGDRCFPCHRLIMAACSPYFRELFFSEDGKEKDIGKEVVLDDVDPNIMDMILQYLYSAEIDLVDDNVQEIFAVANRFQIPSVFTVCVNYLQQKLSMANCLAVFRLGLVLSVPRLAIAARDFIADRFETVSSEEEFLQLAPHELLALIGGDMLNVEKEEVVFESVMKWVRNDKANRVKSLAEAFDCIRFRLLPEKYFREKVETDDIIKGDPELLKKLQLVKDAFKGKLPEKKPKEKKEGEVNGEEEGEEMLPGFLNDNRRLGMYGRDLIVMINDTAAVAYDVVENECFLAAMAEQVPKNHVSLCTKKNQLFIVGGLFVDEESKESPLQCYFYQLDSFSSDWRALPPMPSPRCLFNLGESENLLFAIAGKDLQTNESLDSVMCFDTERMKWSETKKLPLHIHGHSVVSHNNLVYCIGGKTDDNKALSKMFVYNHKQSEWRELASMKTPRAMFGAVVHKGKIIVTGGVNEDGLTALSETYDFDTNKWDTFTEFPQERSSVNLVSSGGNLFSIGGFAIVELEDKNIGPSEITDIWQYEEDKKTWSGMLREMRYASGSSCVGMRLNAARMPKL.

Residues 32–102 (VDCTLKIGDR…YSAEIDLVDD (71 aa)) enclose the BTB domain. The region spanning 136–238 (CLAVFRLGLV…PEKYFREKVE (103 aa)) is the BACK domain. 5 Kelch repeats span residues 345-397 (QLFI…ESEN), 398-446 (LLFA…SHNN), 447-494 (LVYC…VHKG), 496-541 (IIVT…SSGG), and 543-598 (LFSI…MRLN).

It localises to the cytoplasm. It is found in the cytoskeleton. The protein resides in the sarcoplasmic reticulum membrane. Its subcellular location is the endoplasmic reticulum membrane. Functionally, involved in skeletal muscle development and maintenance. The protein is Kelch-like protein 41b of Danio rerio (Zebrafish).